Here is a 287-residue protein sequence, read N- to C-terminus: Very long chain fatty acid elongase 4 (287 aa).

Transmembrane regions (helical) follow at residues 33–53, 64–84, and 115–135; these read ILVY…EHIM, PFVV…YSCV, and FWVF…VFLV. The HxxHH motif motif lies at 145 to 149; that stretch reads HWYHH. Catalysis depends on His-148, which acts as the Nucleophile. Helical transmembrane passes span 150–170, 172–192, 199–219, and 241–261; these read LTVA…GLWF, TMNY…ACGM, IAPF…LIVL, and LGLV…GKLY.

The protein belongs to the ELO family.

Its subcellular location is the membrane. It catalyses the reaction a very-long-chain acyl-CoA + malonyl-CoA + H(+) = a very-long-chain 3-oxoacyl-CoA + CO2 + CoA. In terms of biological role, involved in the synthesis of fatty acids. Elongates C16:0 and C18:0 fatty acids to C26:0, with C24:0 being the main product. The polypeptide is Very long chain fatty acid elongase 4 (Trypanosoma cruzi (strain CL Brener)).